The following is a 323-amino-acid chain: Movement protein (323 aa).

Residues 292 to 322 (SLLENKDENLLRSMSTKIDTLGKKLSLIYDN) adopt a coiled-coil conformation.

The protein belongs to the caulimoviridae movement protein family. In terms of assembly, homotrimer, through the coiled-coil domain. Interacts with VAP.

The protein localises to the host cell junction. The protein resides in the host plasmodesma. Its function is as follows. Transports viral genome to neighboring plant cells directly through plasmosdesmata, without any budding. The movement protein allows efficient cell to cell propagation, by bypassing the host cell wall barrier. Acts by forming tubules structures that increase the size exclusion limit (SEL) of plasmodesmata, thereby allowing viral ribonucleocapsids to spread directly to neighboring cells. This is Movement protein from Figwort mosaic virus (strain DxS) (FMV).